Reading from the N-terminus, the 170-residue chain is Peptide deformylase (170 aa).

Cys91 and His133 together coordinate Fe cation. Residue Glu134 is part of the active site. His137 serves as a coordination point for Fe cation.

It belongs to the polypeptide deformylase family. Requires Fe(2+) as cofactor.

The catalysed reaction is N-terminal N-formyl-L-methionyl-[peptide] + H2O = N-terminal L-methionyl-[peptide] + formate. In terms of biological role, removes the formyl group from the N-terminal Met of newly synthesized proteins. Requires at least a dipeptide for an efficient rate of reaction. N-terminal L-methionine is a prerequisite for activity but the enzyme has broad specificity at other positions. The polypeptide is Peptide deformylase (Pasteurella multocida (strain Pm70)).